The following is a 260-amino-acid chain: Imidazole glycerol phosphate synthase subunit HisF (260 aa).

Catalysis depends on residues Asp-11 and Asp-130.

Belongs to the HisA/HisF family. In terms of assembly, heterodimer of HisH and HisF.

It localises to the cytoplasm. It carries out the reaction 5-[(5-phospho-1-deoxy-D-ribulos-1-ylimino)methylamino]-1-(5-phospho-beta-D-ribosyl)imidazole-4-carboxamide + L-glutamine = D-erythro-1-(imidazol-4-yl)glycerol 3-phosphate + 5-amino-1-(5-phospho-beta-D-ribosyl)imidazole-4-carboxamide + L-glutamate + H(+). It participates in amino-acid biosynthesis; L-histidine biosynthesis; L-histidine from 5-phospho-alpha-D-ribose 1-diphosphate: step 5/9. Functionally, IGPS catalyzes the conversion of PRFAR and glutamine to IGP, AICAR and glutamate. The HisF subunit catalyzes the cyclization activity that produces IGP and AICAR from PRFAR using the ammonia provided by the HisH subunit. In Endomicrobium trichonymphae, this protein is Imidazole glycerol phosphate synthase subunit HisF.